A 105-amino-acid polypeptide reads, in one-letter code: Large ribosomal subunit protein uL24 (105 aa).

The protein belongs to the universal ribosomal protein uL24 family. Part of the 50S ribosomal subunit.

In terms of biological role, one of two assembly initiator proteins, it binds directly to the 5'-end of the 23S rRNA, where it nucleates assembly of the 50S subunit. One of the proteins that surrounds the polypeptide exit tunnel on the outside of the subunit. This is Large ribosomal subunit protein uL24 from Vibrio parahaemolyticus serotype O3:K6 (strain RIMD 2210633).